An 80-amino-acid chain; its full sequence is Large ribosomal subunit protein uL24 (80 aa).

The tract at residues 53-80 is disordered; it reads HMRPTQGQTQGSIIEREFPIHSSNVKKS.

It belongs to the universal ribosomal protein uL24 family. In terms of assembly, part of the 50S ribosomal subunit.

Functionally, one of two assembly initiator proteins, it binds directly to the 5'-end of the 23S rRNA, where it nucleates assembly of the 50S subunit. One of the proteins that surrounds the polypeptide exit tunnel on the outside of the subunit. The protein is Large ribosomal subunit protein uL24 of Pelodictyon phaeoclathratiforme (strain DSM 5477 / BU-1).